The sequence spans 228 residues: Phosphoribosylformylglycinamidine synthase subunit PurQ (228 aa).

The region spanning 3-226 (FAVIVFPGSN…IANWRDSYAI (224 aa)) is the Glutamine amidotransferase type-1 domain. The Nucleophile role is filled by Cys87. Active-site residues include His195 and Glu197.

Part of the FGAM synthase complex composed of 1 PurL, 1 PurQ and 2 PurS subunits.

It localises to the cytoplasm. The catalysed reaction is N(2)-formyl-N(1)-(5-phospho-beta-D-ribosyl)glycinamide + L-glutamine + ATP + H2O = 2-formamido-N(1)-(5-O-phospho-beta-D-ribosyl)acetamidine + L-glutamate + ADP + phosphate + H(+). It carries out the reaction L-glutamine + H2O = L-glutamate + NH4(+). Its pathway is purine metabolism; IMP biosynthesis via de novo pathway; 5-amino-1-(5-phospho-D-ribosyl)imidazole from N(2)-formyl-N(1)-(5-phospho-D-ribosyl)glycinamide: step 1/2. In terms of biological role, part of the phosphoribosylformylglycinamidine synthase complex involved in the purines biosynthetic pathway. Catalyzes the ATP-dependent conversion of formylglycinamide ribonucleotide (FGAR) and glutamine to yield formylglycinamidine ribonucleotide (FGAM) and glutamate. The FGAM synthase complex is composed of three subunits. PurQ produces an ammonia molecule by converting glutamine to glutamate. PurL transfers the ammonia molecule to FGAR to form FGAM in an ATP-dependent manner. PurS interacts with PurQ and PurL and is thought to assist in the transfer of the ammonia molecule from PurQ to PurL. This Oceanobacillus iheyensis (strain DSM 14371 / CIP 107618 / JCM 11309 / KCTC 3954 / HTE831) protein is Phosphoribosylformylglycinamidine synthase subunit PurQ.